The following is an 84-amino-acid chain: Anaphase-promoting complex subunit 11 (84 aa).

Zn(2+)-binding residues include Cys-23, Cys-26, Cys-34, Cys-37, Cys-44, Cys-51, His-53, His-56, His-58, Cys-59, Cys-73, and Cys-76. The RING-type zinc-finger motif lies at 34-77; that stretch reads CPDCKVPGDDCPLVWGQCSHCFHMHCILKWLNAQQVQQHCPMCR.

This sequence belongs to the RING-box family. In terms of assembly, the mammalian APC/C is composed at least of 14 distinct subunits ANAPC1, ANAPC2, CDC27/APC3, ANAPC4, ANAPC5, CDC16/APC6, ANAPC7, CDC23/APC8, ANAPC10, ANAPC11, CDC26/APC12, ANAPC13, ANAPC15 and ANAPC16 that assemble into a complex of at least 19 chains with a combined molecular mass of around 1.2 MDa; APC/C interacts with FZR1 and FBXO5. Interacts with the cullin domain of ANAPC2. Interacts with UBE2D2. Auto-ubiquitinated.

The protein resides in the cytoplasm. It is found in the nucleus. It participates in protein modification; protein ubiquitination. In terms of biological role, together with the cullin protein ANAPC2, constitutes the catalytic component of the anaphase promoting complex/cyclosome (APC/C), a cell cycle-regulated E3 ubiquitin ligase that controls progression through mitosis and the G1 phase of the cell cycle. The APC/C complex acts by mediating ubiquitination and subsequent degradation of target proteins: it mainly mediates the formation of 'Lys-11'-linked polyubiquitin chains and, to a lower extent, the formation of 'Lys-48'- and 'Lys-63'-linked polyubiquitin chains. The APC/C complex catalyzes assembly of branched 'Lys-11'-/'Lys-48'-linked branched ubiquitin chains on target proteins. May recruit the E2 ubiquitin-conjugating enzymes to the complex. The polypeptide is Anaphase-promoting complex subunit 11 (Anapc11) (Mus musculus (Mouse)).